Reading from the N-terminus, the 122-residue chain is Large ribosomal subunit protein uL14 (122 aa).

This sequence belongs to the universal ribosomal protein uL14 family. In terms of assembly, part of the 50S ribosomal subunit. Forms a cluster with proteins L3 and L19. In the 70S ribosome, L14 and L19 interact and together make contacts with the 16S rRNA in bridges B5 and B8.

Functionally, binds to 23S rRNA. Forms part of two intersubunit bridges in the 70S ribosome. This chain is Large ribosomal subunit protein uL14, found in Colwellia psychrerythraea (strain 34H / ATCC BAA-681) (Vibrio psychroerythus).